The sequence spans 336 residues: UDP-N-acetylglucosamine--N-acetylmuramyl-(pentapeptide) pyrophosphoryl-undecaprenol N-acetylglucosamine transferase (336 aa).

UDP-N-acetyl-alpha-D-glucosamine is bound by residues 10–12 (TGG), N124, R157, S179, and Q277.

This sequence belongs to the glycosyltransferase 28 family. MurG subfamily.

Its subcellular location is the cell inner membrane. The enzyme catalyses di-trans,octa-cis-undecaprenyl diphospho-N-acetyl-alpha-D-muramoyl-L-alanyl-D-glutamyl-meso-2,6-diaminopimeloyl-D-alanyl-D-alanine + UDP-N-acetyl-alpha-D-glucosamine = di-trans,octa-cis-undecaprenyl diphospho-[N-acetyl-alpha-D-glucosaminyl-(1-&gt;4)]-N-acetyl-alpha-D-muramoyl-L-alanyl-D-glutamyl-meso-2,6-diaminopimeloyl-D-alanyl-D-alanine + UDP + H(+). It participates in cell wall biogenesis; peptidoglycan biosynthesis. In terms of biological role, cell wall formation. Catalyzes the transfer of a GlcNAc subunit on undecaprenyl-pyrophosphoryl-MurNAc-pentapeptide (lipid intermediate I) to form undecaprenyl-pyrophosphoryl-MurNAc-(pentapeptide)GlcNAc (lipid intermediate II). This chain is UDP-N-acetylglucosamine--N-acetylmuramyl-(pentapeptide) pyrophosphoryl-undecaprenol N-acetylglucosamine transferase, found in Wolinella succinogenes (strain ATCC 29543 / DSM 1740 / CCUG 13145 / JCM 31913 / LMG 7466 / NCTC 11488 / FDC 602W) (Vibrio succinogenes).